Here is a 98-residue protein sequence, read N- to C-terminus: Defensin (98 aa).

The signal sequence occupies residues 1-19; sequence MRTFLVTFVLVVVVGVISA. Residues 20-58 constitute a propeptide that is removed on maturation; it reads YPSNPVEVEAEDFDAQDPDLQTFQDTFYEVPQVHSRQKR. Cystine bridges form between C61–C88, C74–C94, and C78–C96.

As to expression, is synthesized by the fat body and eventually secreted into the hemolymph.

It localises to the secreted. Functionally, has antiparasitic activity against promastigote forms of L.major, and antibacterial activity against Gram-positive bacterium S.aureus. Has antifungal activity against the yeasts C.albicans and S.cerevisiae, but not C.glabrata. Has antifungal activity against filamentous fungi A.fumigatus, F.culmorum, F.oxysporum, N.crassa, T.viride and T.mentagrophytes, but not B.bassiana. The chain is Defensin from Phlebotomus duboscqi (Sandfly).